Reading from the N-terminus, the 309-residue chain is MTATNHPKLFKRPVDGVLLLDKPGGMTSNEALQRVKRLFHAKKAGHTGSLDPLATGLLPICLGEATKFSQFLLEADKSYSVKGRLGVRTASGDSESPILTERPIPKLTKRALEKTLFAFRGVIDQTPSMYSALKHKGQPLYKLARQGIEVERKTRQVTIYELTLLDWDNESIELYVHCSKGTYIRTLLDDVGEALGCGAHVVALRRLRVAHYHEDQMIKLAHLEREYDKANYTGLDRYLLPLETMVSHFPAIKLSSSTAFYLQQGQAVMVPNAPTHGFVRLRDQNDQFIGIGEILSDARIAPRRLIQKR.

D51 serves as the catalytic Nucleophile.

This sequence belongs to the pseudouridine synthase TruB family. Type 1 subfamily.

It carries out the reaction uridine(55) in tRNA = pseudouridine(55) in tRNA. Responsible for synthesis of pseudouridine from uracil-55 in the psi GC loop of transfer RNAs. This chain is tRNA pseudouridine synthase B, found in Coxiella burnetii (strain RSA 493 / Nine Mile phase I).